The sequence spans 312 residues: Pyridoxal kinase (312 aa).

Met-1 is subject to N-acetylmethionine. The pyridoxal site is built by Ser-12 and Thr-47. Thr-47 lines the pyridoxal 5'-phosphate pocket. Phosphoserine is present on Ser-59. Asp-113 is a binding site for ATP. Asp-113 contributes to the Na(+) binding site. Asp-118 is a Mg(2+) binding site. Thr-148 is a binding site for Na(+). 150–153 (NQFE) lines the ATP pocket. Ser-164 is subject to Phosphoserine. Na(+) is bound at residue Thr-186. Residue 186-187 (TS) participates in ATP binding. Ser-213 carries the phosphoserine modification. Residues 226-228 (VDA) and Thr-233 each bind ATP. Residue 234 to 235 (GD) coordinates pyridoxal 5'-phosphate. Residue Asp-235 is the Proton acceptor of the active site. Ser-285 carries the phosphoserine modification.

This sequence belongs to the pyridoxine kinase family. Homodimer. Requires Mg(2+) as cofactor. Zn(2+) is required as a cofactor. Co(2+) serves as cofactor. It depends on Mn(2+) as a cofactor. Ubiquitous. Highly expressed in testis. In terms of tissue distribution, in adult testis and spermatozoa.

Its subcellular location is the cytoplasm. It localises to the cytosol. It carries out the reaction pyridoxal + ATP = pyridoxal 5'-phosphate + ADP + H(+). It catalyses the reaction pyridoxamine + ATP = pyridoxamine 5'-phosphate + ADP + H(+). The enzyme catalyses pyridoxine + ATP = pyridoxine 5'-phosphate + ADP + H(+). It functions in the pathway cofactor metabolism; pyridoxal 5'-phosphate salvage; pyridoxal 5'-phosphate from pyridoxal: step 1/1. It participates in cofactor metabolism; pyridoxal 5'-phosphate salvage; pyridoxine 5'-phosphate from pyridoxine: step 1/1. The protein operates within cofactor metabolism; pyridoxal 5'-phosphate salvage; pyridoxamine 5'-phosphate from pyridoxamine: step 1/1. Catalytic activity is inhibited competitively by 4-deoxypyridoxine, and is also inhibited by the benzodiazepine receptor ligands 1012S and ethyl-beta-carboline-3-carboxylate. Inhibited by ginkgotoxin, theophylline, lamotrigine, enprofylline, theobromine, and caffeine. Activity is increased in the presence of K(+)or Na(+). Catalyzes the phosphorylation of the dietary vitamin B6 vitamers pyridoxal (PL), pyridoxine (PN) and pyridoxamine (PM) to form pyridoxal 5'-phosphate (PLP), pyridoxine 5'-phosphate (PNP) and pyridoxamine 5'-phosphate (PMP), respectively. PLP is the active form of vitamin B6, and acts as a cofactor for over 140 different enzymatic reactions. The sequence is that of Pyridoxal kinase from Homo sapiens (Human).